The sequence spans 64 residues: Large ribosomal subunit protein uL29 (64 aa).

It belongs to the universal ribosomal protein uL29 family.

This Psychrobacter sp. (strain PRwf-1) protein is Large ribosomal subunit protein uL29.